Consider the following 193-residue polypeptide: 7-methyl-GTP pyrophosphatase (193 aa).

The active-site Proton acceptor is the Asp70.

This sequence belongs to the Maf family. YceF subfamily. Requires a divalent metal cation as cofactor.

Its subcellular location is the cytoplasm. It catalyses the reaction N(7)-methyl-GTP + H2O = N(7)-methyl-GMP + diphosphate + H(+). Its function is as follows. Nucleoside triphosphate pyrophosphatase that hydrolyzes 7-methyl-GTP (m(7)GTP). May have a dual role in cell division arrest and in preventing the incorporation of modified nucleotides into cellular nucleic acids. The protein is 7-methyl-GTP pyrophosphatase of Vibrio parahaemolyticus serotype O3:K6 (strain RIMD 2210633).